Reading from the N-terminus, the 400-residue chain is Subtilisin-like protease 7 (400 aa).

The N-terminal stretch at 1–20 is a signal peptide; it reads MGFITKAIPLALAAASVING. Positions 21 to 119 are excised as a propeptide; it reads AEIMETRAGV…IERDARVQIN (99 aa). Positions 36–118 constitute an Inhibitor I9 domain; it reads KYIVVMNDGM…YIERDARVQI (83 aa). N-linked (GlcNAc...) asparagine glycosylation is present at asparagine 58. The 272-residue stretch at 129-400 folds into the Peptidase S8 domain; sequence SWGLARVGSK…SKLINNGSGM (272 aa). Active-site charge relay system residues include aspartate 161 and histidine 192. Asparagine 222 and asparagine 252 each carry an N-linked (GlcNAc...) asparagine glycan. Catalysis depends on serine 346, which acts as the Charge relay system. Asparagine 396 carries an N-linked (GlcNAc...) asparagine glycan.

It belongs to the peptidase S8 family.

The protein localises to the secreted. Its function is as follows. Secreted subtilisin-like serine protease with keratinolytic activity that contributes to pathogenicity. In Arthroderma benhamiae (Trichophyton mentagrophytes), this protein is Subtilisin-like protease 7 (SUB7).